Here is a 161-residue protein sequence, read N- to C-terminus: Thy-1 membrane glycoprotein (161 aa).

A signal peptide spans 1–19; it reads MNLAISIALLLTVLQVSRG. Gln20 carries the pyrrolidone carboxylic acid modification. Residues 20 to 126 form the Ig-like V-type domain; that stretch reads QKVTSLTACL…SQNVTVLRDK (107 aa). 2 disulfide bridges follow: Cys28–Cys130 and Cys38–Cys104. Asn42 and Asn79 each carry an N-linked (GlcNAc...) asparagine glycan. Ser82 is subject to Phosphoserine. N-linked (GlcNAc...) asparagine glycosylation occurs at Asn119. A lipid anchor (GPI-anchor amidated cysteine; alternate) is attached at Cys130. Residues 131–161 constitute a propeptide, removed in mature form; sequence EGISLLAQNTSWLLLLLLSLSLLQATDFMSL. Asn139 carries N-linked (GlcNAc...) asparagine glycosylation.

The protein resides in the cell membrane. May play a role in cell-cell or cell-ligand interactions during synaptogenesis and other events in the brain. The protein is Thy-1 membrane glycoprotein (THY1) of Homo sapiens (Human).